The sequence spans 282 residues: uncharacterized protein (282 aa).

This is an uncharacterized protein from Rickettsia conorii (strain ATCC VR-613 / Malish 7).